The sequence spans 1193 residues: DNA-directed RNA polymerase subunit beta (1193 aa).

Residues 1149 to 1162 (EEEIEMRDLEDEED) show a composition bias toward acidic residues. The disordered stretch occupies residues 1149 to 1193 (EEEIEMRDLEDEEDAKQADGLALSGDEEPEETASADVERDVVTKE). Residues 1184–1193 (DVERDVVTKE) show a composition bias toward basic and acidic residues.

Belongs to the RNA polymerase beta chain family. As to quaternary structure, RNAP is composed of a core of 2 alpha, a beta and a beta' subunit. The core is associated with a delta subunit, and at least one of epsilon or omega. When a sigma factor is associated with the core the holoenzyme is formed, which can initiate transcription.

It catalyses the reaction RNA(n) + a ribonucleoside 5'-triphosphate = RNA(n+1) + diphosphate. DNA-dependent RNA polymerase catalyzes the transcription of DNA into RNA using the four ribonucleoside triphosphates as substrates. The sequence is that of DNA-directed RNA polymerase subunit beta from Bacillus subtilis (strain 168).